A 115-amino-acid chain; its full sequence is Large ribosomal subunit protein uL18 (115 aa).

It belongs to the universal ribosomal protein uL18 family. As to quaternary structure, part of the 50S ribosomal subunit; part of the 5S rRNA/L5/L18/L25 subcomplex. Contacts the 5S and 23S rRNAs.

Functionally, this is one of the proteins that bind and probably mediate the attachment of the 5S RNA into the large ribosomal subunit, where it forms part of the central protuberance. The protein is Large ribosomal subunit protein uL18 of Ruthia magnifica subsp. Calyptogena magnifica.